The chain runs to 473 residues: ATP synthase subunit beta (473 aa).

An ATP-binding site is contributed by 153 to 160 (GGAGVGKT).

This sequence belongs to the ATPase alpha/beta chains family. As to quaternary structure, F-type ATPases have 2 components, CF(1) - the catalytic core - and CF(0) - the membrane proton channel. CF(1) has five subunits: alpha(3), beta(3), gamma(1), delta(1), epsilon(1). CF(0) has three main subunits: a(1), b(2) and c(9-12). The alpha and beta chains form an alternating ring which encloses part of the gamma chain. CF(1) is attached to CF(0) by a central stalk formed by the gamma and epsilon chains, while a peripheral stalk is formed by the delta and b chains.

The protein localises to the cell inner membrane. The enzyme catalyses ATP + H2O + 4 H(+)(in) = ADP + phosphate + 5 H(+)(out). Produces ATP from ADP in the presence of a proton gradient across the membrane. The catalytic sites are hosted primarily by the beta subunits. The polypeptide is ATP synthase subunit beta (Rickettsia massiliae (strain Mtu5)).